Reading from the N-terminus, the 408-residue chain is Probable 2,3-bisphosphoglycerate-independent phosphoglycerate mutase (408 aa).

Belongs to the BPG-independent phosphoglycerate mutase family. A-PGAM subfamily.

It catalyses the reaction (2R)-2-phosphoglycerate = (2R)-3-phosphoglycerate. It functions in the pathway carbohydrate degradation; glycolysis; pyruvate from D-glyceraldehyde 3-phosphate: step 3/5. In terms of biological role, catalyzes the interconversion of 2-phosphoglycerate and 3-phosphoglycerate. This is Probable 2,3-bisphosphoglycerate-independent phosphoglycerate mutase from Deinococcus geothermalis (strain DSM 11300 / CIP 105573 / AG-3a).